The chain runs to 232 residues: Putative quercetin 2,3-dioxygenase PA1210 (232 aa).

A divalent metal cation-binding residues include H57, H59, H101, and E103.

Belongs to the pirin family. It depends on a divalent metal cation as a cofactor.

It catalyses the reaction quercetin + O2 = 2-(3,4-dihydroxybenzoyloxy)-4,6-dihydroxybenzoate + CO. The protein operates within flavonoid metabolism; quercetin degradation. Putative quercetin 2,3-dioxygenase. This chain is Putative quercetin 2,3-dioxygenase PA1210, found in Pseudomonas aeruginosa (strain ATCC 15692 / DSM 22644 / CIP 104116 / JCM 14847 / LMG 12228 / 1C / PRS 101 / PAO1).